Here is a 136-residue protein sequence, read N- to C-terminus: Large ribosomal subunit protein uL16 (136 aa).

This sequence belongs to the universal ribosomal protein uL16 family. As to quaternary structure, part of the 50S ribosomal subunit.

Functionally, binds 23S rRNA and is also seen to make contacts with the A and possibly P site tRNAs. This Yersinia enterocolitica serotype O:8 / biotype 1B (strain NCTC 13174 / 8081) protein is Large ribosomal subunit protein uL16.